The sequence spans 153 residues: Ribosomal RNA large subunit methyltransferase H (153 aa).

Residues leucine 70, glycine 102, and 121–126 (LSRMTF) contribute to the S-adenosyl-L-methionine site.

It belongs to the RNA methyltransferase RlmH family. As to quaternary structure, homodimer.

Its subcellular location is the cytoplasm. It catalyses the reaction pseudouridine(1915) in 23S rRNA + S-adenosyl-L-methionine = N(3)-methylpseudouridine(1915) in 23S rRNA + S-adenosyl-L-homocysteine + H(+). Its function is as follows. Specifically methylates the pseudouridine at position 1915 (m3Psi1915) in 23S rRNA. This chain is Ribosomal RNA large subunit methyltransferase H, found in Geotalea uraniireducens (strain Rf4) (Geobacter uraniireducens).